We begin with the raw amino-acid sequence, 446 residues long: N-succinylarginine dihydrolase (446 aa).

Substrate-binding positions include 19–28 (AGLSFGNEAS), asparagine 110, and 137–138 (HR). Residue glutamate 174 is part of the active site. Arginine 213 lines the substrate pocket. Histidine 249 is an active-site residue. The substrate site is built by aspartate 251 and asparagine 364. Cysteine 370 (nucleophile) is an active-site residue.

This sequence belongs to the succinylarginine dihydrolase family. As to quaternary structure, homodimer.

The enzyme catalyses N(2)-succinyl-L-arginine + 2 H2O + 2 H(+) = N(2)-succinyl-L-ornithine + 2 NH4(+) + CO2. It functions in the pathway amino-acid degradation; L-arginine degradation via AST pathway; L-glutamate and succinate from L-arginine: step 2/5. Functionally, catalyzes the hydrolysis of N(2)-succinylarginine into N(2)-succinylornithine, ammonia and CO(2). The sequence is that of N-succinylarginine dihydrolase from Acinetobacter baylyi (strain ATCC 33305 / BD413 / ADP1).